Consider the following 164-residue polypeptide: 6,7-dimethyl-8-ribityllumazine synthase 1 (164 aa).

5-amino-6-(D-ribitylamino)uracil is bound by residues phenylalanine 27, 58–60, and 87–89; these read SLE and TII. (2S)-2-hydroxy-3-oxobutyl phosphate is bound at residue 92-93; that stretch reads DT. The active-site Proton donor is histidine 95. Asparagine 120 is a 5-amino-6-(D-ribitylamino)uracil binding site. Position 134 (arginine 134) interacts with (2S)-2-hydroxy-3-oxobutyl phosphate.

Belongs to the DMRL synthase family. In terms of assembly, homopentamer.

It carries out the reaction (2S)-2-hydroxy-3-oxobutyl phosphate + 5-amino-6-(D-ribitylamino)uracil = 6,7-dimethyl-8-(1-D-ribityl)lumazine + phosphate + 2 H2O + H(+). It functions in the pathway cofactor biosynthesis; riboflavin biosynthesis; riboflavin from 2-hydroxy-3-oxobutyl phosphate and 5-amino-6-(D-ribitylamino)uracil: step 1/2. Functionally, catalyzes the formation of 6,7-dimethyl-8-ribityllumazine by condensation of 5-amino-6-(D-ribitylamino)uracil with 3,4-dihydroxy-2-butanone 4-phosphate. This is the penultimate step in the biosynthesis of riboflavin. The polypeptide is 6,7-dimethyl-8-ribityllumazine synthase 1 (ribH1) (Mesorhizobium japonicum (strain LMG 29417 / CECT 9101 / MAFF 303099) (Mesorhizobium loti (strain MAFF 303099))).